A 401-amino-acid chain; its full sequence is Beta-ketoadipyl-CoA thiolase (401 aa).

Residue Cys90 is the Acyl-thioester intermediate of the active site. Catalysis depends on proton acceptor residues His357 and Cys387.

Belongs to the thiolase-like superfamily. Thiolase family.

The catalysed reaction is succinyl-CoA + acetyl-CoA = 3-oxoadipyl-CoA + CoA. It participates in aromatic compound metabolism; beta-ketoadipate pathway; acetyl-CoA and succinyl-CoA from 3-oxoadipate: step 2/2. Functionally, catalyzes thiolytic cleavage of beta-ketoadipyl-CoA to succinyl-CoA and acetyl-CoA. In Acinetobacter baylyi (strain ATCC 33305 / BD413 / ADP1), this protein is Beta-ketoadipyl-CoA thiolase (pcaF).